The primary structure comprises 96 residues: MSRSCELTGKGVQSGHNVSHANNKTKRKFLPNLCNVTLISDALGQRFRLRVSAAALRSVEHRGGLDAFLLKADENELSMRARLLRRQIVKKAAEAA.

Residues 1-24 (MSRSCELTGKGVQSGHNVSHANNK) form a disordered region.

It belongs to the bacterial ribosomal protein bL28 family.

In Sinorhizobium fredii (strain NBRC 101917 / NGR234), this protein is Large ribosomal subunit protein bL28.